A 236-amino-acid polypeptide reads, in one-letter code: tRNA (guanine-N(7)-)-methyltransferase (236 aa).

Positions 68, 93, 120, and 143 each coordinate S-adenosyl-L-methionine. D143 is a catalytic residue. Substrate-binding positions include K147, D179, and 212–215; that span reads TKFE.

It belongs to the class I-like SAM-binding methyltransferase superfamily. TrmB family.

The enzyme catalyses guanosine(46) in tRNA + S-adenosyl-L-methionine = N(7)-methylguanosine(46) in tRNA + S-adenosyl-L-homocysteine. Its pathway is tRNA modification; N(7)-methylguanine-tRNA biosynthesis. In terms of biological role, catalyzes the formation of N(7)-methylguanine at position 46 (m7G46) in tRNA. The protein is tRNA (guanine-N(7)-)-methyltransferase of Nitrosococcus oceani (strain ATCC 19707 / BCRC 17464 / JCM 30415 / NCIMB 11848 / C-107).